A 348-amino-acid chain; its full sequence is UPF0283 membrane protein HAPS_0079 (348 aa).

A run of 3 helical transmembrane segments spans residues 57 to 77 (FLAA…QWLI), 86 to 106 (IYFA…GAII), and 203 to 223 (ENAI…MVAW).

Belongs to the UPF0283 family.

It localises to the cell inner membrane. This is UPF0283 membrane protein HAPS_0079 from Glaesserella parasuis serovar 5 (strain SH0165) (Haemophilus parasuis).